The primary structure comprises 329 residues: Malate dehydrogenase (329 aa).

12–18 (GAAGQIG) contacts NAD(+). Residues R93 and R99 each coordinate substrate. Residues N106, Q113, and 130–132 (VGN) contribute to the NAD(+) site. Substrate is bound by residues N132 and R163. H188 serves as the catalytic Proton acceptor.

This sequence belongs to the LDH/MDH superfamily. MDH type 2 family.

It catalyses the reaction (S)-malate + NAD(+) = oxaloacetate + NADH + H(+). In terms of biological role, catalyzes the reversible oxidation of malate to oxaloacetate. The chain is Malate dehydrogenase from Frankia alni (strain DSM 45986 / CECT 9034 / ACN14a).